Reading from the N-terminus, the 580-residue chain is Aspartate--tRNA ligase (580 aa).

An L-aspartate-binding site is contributed by Glu-173. Residues 195-198 (QIYK) form an aspartate region. Residue Arg-217 coordinates L-aspartate. ATP-binding positions include 217–219 (RDE) and Gln-226. His-443 lines the L-aspartate pocket. Glu-477 is a binding site for ATP. Position 484 (Arg-484) interacts with L-aspartate. 529 to 532 (GIER) contributes to the ATP binding site.

The protein belongs to the class-II aminoacyl-tRNA synthetase family. Type 1 subfamily. As to quaternary structure, homodimer.

It is found in the cytoplasm. It catalyses the reaction tRNA(Asp) + L-aspartate + ATP = L-aspartyl-tRNA(Asp) + AMP + diphosphate. In terms of biological role, catalyzes the attachment of L-aspartate to tRNA(Asp) in a two-step reaction: L-aspartate is first activated by ATP to form Asp-AMP and then transferred to the acceptor end of tRNA(Asp). The chain is Aspartate--tRNA ligase from Malacoplasma penetrans (strain HF-2) (Mycoplasma penetrans).